The chain runs to 162 residues: NADH-quinone oxidoreductase subunit E (162 aa).

[2Fe-2S] cluster-binding residues include cysteine 88, cysteine 93, cysteine 129, and cysteine 133.

The protein belongs to the complex I 24 kDa subunit family. Composed of 13 different subunits. Subunits NuoCD, E, F, and G constitute the peripheral sector of the complex. The cofactor is [2Fe-2S] cluster.

The catalysed reaction is a quinone + NADH + 5 H(+)(in) = a quinol + NAD(+) + 4 H(+)(out). Its function is as follows. NDH-1 shuttles electrons from NADH, via FMN and iron-sulfur (Fe-S) centers, to quinones in the respiratory chain. Couples the redox reaction to proton translocation (for every two electrons transferred, four hydrogen ions are translocated across the cytoplasmic membrane), and thus conserves the redox energy in a proton gradient. This is NADH-quinone oxidoreductase subunit E (nuoE) from Buchnera aphidicola subsp. Acyrthosiphon pisum (strain APS) (Acyrthosiphon pisum symbiotic bacterium).